A 75-amino-acid chain; its full sequence is UPF0352 protein YejL (75 aa).

It belongs to the UPF0352 family.

The protein is UPF0352 protein YejL of Shigella dysenteriae serotype 1 (strain Sd197).